We begin with the raw amino-acid sequence, 113 residues long: Histone H2B (113 aa).

The interval 1-21 (MPATPAKRAKRVQQEKRHHKK) is disordered. Basic residues predominate over residues 7 to 21 (KRAKRVQQEKRHHKK). Lysine 109 is covalently cross-linked (Glycyl lysine isopeptide (Lys-Gly) (interchain with G-Cter in ubiquitin)).

Belongs to the histone H2B family. As to quaternary structure, the nucleosome is a histone octamer containing two molecules each of H2A, H2B, H3 and H4 assembled in one H3-H4 heterotetramer and two H2A-H2B heterodimers. The octamer wraps approximately 147 bp of DNA. Monoubiquitination of Lys-109 gives a specific tag for epigenetic transcriptional activation and is also prerequisite for histone H3 'Lys-4' and 'Lys-79' methylation.

The protein localises to the nucleus. It is found in the chromosome. Core component of nucleosome. Nucleosomes wrap and compact DNA into chromatin, limiting DNA accessibility to the cellular machineries which require DNA as a template. Histones thereby play a central role in transcription regulation, DNA repair, DNA replication and chromosomal stability. DNA accessibility is regulated via a complex set of post-translational modifications of histones, also called histone code, and nucleosome remodeling. This is Histone H2B (H2B1) from Euplotes crassus.